The sequence spans 204 residues: LexA repressor (204 aa).

The H-T-H motif DNA-binding region spans 28-48 (RAEIANRLGFKSANAAEEHLK). Active-site for autocatalytic cleavage activity residues include S121 and K158.

It belongs to the peptidase S24 family. As to quaternary structure, homodimer.

The catalysed reaction is Hydrolysis of Ala-|-Gly bond in repressor LexA.. In terms of biological role, represses a number of genes involved in the response to DNA damage (SOS response), including recA and lexA. In the presence of single-stranded DNA, RecA interacts with LexA causing an autocatalytic cleavage which disrupts the DNA-binding part of LexA, leading to derepression of the SOS regulon and eventually DNA repair. In Shewanella frigidimarina (strain NCIMB 400), this protein is LexA repressor.